The chain runs to 412 residues: [Pyruvate dehydrogenase (acetyl-transferring)] kinase isozyme 4, mitochondrial (412 aa).

A Histidine kinase domain is found at 138–368 (ILEYKDNCTV…DAIIYLKALS (231 aa)). ATP contacts are provided by residues 254–261 (ELFKNAMR), D293, 312–313 (ST), and 329–334 (GFGYGL).

Belongs to the PDK/BCKDK protein kinase family. In terms of assembly, homodimer. Interacts with the pyruvate dehydrogenase complex subunit DLAT, and is part of the multimeric pyruvate dehydrogenase complex that contains multiple copies of pyruvate dehydrogenase (E1), dihydrolipoamide acetyltransferase (DLAT, E2) and lipoamide dehydrogenase (DLD, E3). As to expression, ubiquitous; highest levels of expression in heart and skeletal muscle.

The protein localises to the mitochondrion matrix. It carries out the reaction L-seryl-[pyruvate dehydrogenase E1 alpha subunit] + ATP = O-phospho-L-seryl-[pyruvate dehydrogenase E1 alpha subunit] + ADP + H(+). Kinase that plays a key role in regulation of glucose and fatty acid metabolism and homeostasis via phosphorylation of the pyruvate dehydrogenase subunits PDHA1 and PDHA2. This inhibits pyruvate dehydrogenase activity, and thereby regulates metabolite flux through the tricarboxylic acid cycle, down-regulates aerobic respiration and inhibits the formation of acetyl-coenzyme A from pyruvate. Inhibition of pyruvate dehydrogenase decreases glucose utilization and increases fat metabolism in response to prolonged fasting and starvation. Plays an important role in maintaining normal blood glucose levels under starvation, and is involved in the insulin signaling cascade. Via its regulation of pyruvate dehydrogenase activity, plays an important role in maintaining normal blood pH and in preventing the accumulation of ketone bodies under starvation. In the fed state, mediates cellular responses to glucose levels and to a high-fat diet. Regulates both fatty acid oxidation and de novo fatty acid biosynthesis. Plays a role in the generation of reactive oxygen species. Protects detached epithelial cells against anoikis. Plays a role in cell proliferation via its role in regulating carbohydrate and fatty acid metabolism. The protein is [Pyruvate dehydrogenase (acetyl-transferring)] kinase isozyme 4, mitochondrial (Pdk4) of Rattus norvegicus (Rat).